A 124-amino-acid chain; its full sequence is Fluoride-specific ion channel FluC (124 aa).

Transmembrane regions (helical) follow at residues 3–23 (YLLV…INTV), 36–56 (TFFI…YFAF), 66–86 (LFLM…SLDA), and 100–120 (LYVL…LALI). Residues Gly-74 and Thr-77 each coordinate Na(+).

Belongs to the fluoride channel Fluc/FEX (TC 1.A.43) family.

The protein localises to the cell inner membrane. It carries out the reaction fluoride(in) = fluoride(out). Na(+) is not transported, but it plays an essential structural role and its presence is essential for fluoride channel function. In terms of biological role, fluoride-specific ion channel. Important for reducing fluoride concentration in the cell, thus reducing its toxicity. In Rhodopseudomonas palustris (strain BisB5), this protein is Fluoride-specific ion channel FluC.